Reading from the N-terminus, the 198-residue chain is NAD(P)H dehydrogenase (quinone) (198 aa).

The Flavodoxin-like domain maps to 4 to 189 (ILVLYYSMYG…AIARYQGEHV (186 aa)). FMN is bound by residues 10–15 (SMYGHI) and 78–80 (TRF). Tyr-12 provides a ligand contact to NAD(+). Substrate is bound at residue Trp-98. FMN-binding positions include 113 to 118 (STGTGG) and His-133.

It belongs to the WrbA family. FMN serves as cofactor.

The catalysed reaction is a quinone + NADH + H(+) = a quinol + NAD(+). It catalyses the reaction a quinone + NADPH + H(+) = a quinol + NADP(+). The protein is NAD(P)H dehydrogenase (quinone) of Klebsiella pneumoniae (strain 342).